A 684-amino-acid chain; its full sequence is Pseudohemocyanin-1 (684 aa).

The first 23 residues, 1–23, serve as a signal peptide directing secretion; the sequence is SLVVAAAAASPYSGSHDFSGFQR. The tract at residues 7 to 32 is disordered; the sequence is AAASPYSGSHDFSGFQRDEPDGVPTA. Residues Asn-100, Asn-193, Asn-230, and Asn-626 are each glycosylated (N-linked (GlcNAc...) asparagine).

Belongs to the tyrosinase family. Hemocyanin subfamily. As to quaternary structure, hexamer. In terms of tissue distribution, strongly expressed in ovaries. Also expressed in heart. Not detected in hepatopancreas, gills, connective tissue or muscle.

Does not function as a hemocyanin. In Homarus americanus (American lobster), this protein is Pseudohemocyanin-1.